The chain runs to 460 residues: uncharacterized protein (460 aa).

Positions 8-66 constitute a TRAM domain; that stretch reads PVEKNEFIDVVFEDLTHDGAGVAKVKGYPIFVKNGLPGEEAQIKIIKVKKNFAFGRLMK. [4Fe-4S] cluster-binding residues include cysteine 79, cysteine 85, cysteine 88, and cysteine 166. S-adenosyl-L-methionine is bound by residues glutamine 290, tyrosine 319, glutamate 340, and aspartate 388. Residue cysteine 415 is the Nucleophile of the active site.

Belongs to the class I-like SAM-binding methyltransferase superfamily. RNA M5U methyltransferase family.

This is an uncharacterized protein from Bacillus cereus (strain ATCC 10987 / NRS 248).